The primary structure comprises 449 residues: Xylose isomerase (449 aa).

Residues histidine 103 and aspartate 106 contribute to the active site. Mg(2+)-binding residues include glutamate 234, glutamate 270, histidine 273, aspartate 298, aspartate 309, aspartate 311, and aspartate 342.

The protein belongs to the xylose isomerase family. In terms of assembly, homotetramer. Mg(2+) serves as cofactor.

The protein localises to the cytoplasm. It catalyses the reaction alpha-D-xylose = alpha-D-xylulofuranose. This chain is Xylose isomerase, found in Levilactobacillus brevis (strain ATCC 367 / BCRC 12310 / CIP 105137 / JCM 1170 / LMG 11437 / NCIMB 947 / NCTC 947) (Lactobacillus brevis).